We begin with the raw amino-acid sequence, 579 residues long: Proline--tRNA ligase (579 aa).

It belongs to the class-II aminoacyl-tRNA synthetase family. ProS type 1 subfamily. As to quaternary structure, homodimer.

It localises to the cytoplasm. It carries out the reaction tRNA(Pro) + L-proline + ATP = L-prolyl-tRNA(Pro) + AMP + diphosphate. Functionally, catalyzes the attachment of proline to tRNA(Pro) in a two-step reaction: proline is first activated by ATP to form Pro-AMP and then transferred to the acceptor end of tRNA(Pro). As ProRS can inadvertently accommodate and process non-cognate amino acids such as alanine and cysteine, to avoid such errors it has two additional distinct editing activities against alanine. One activity is designated as 'pretransfer' editing and involves the tRNA(Pro)-independent hydrolysis of activated Ala-AMP. The other activity is designated 'posttransfer' editing and involves deacylation of mischarged Ala-tRNA(Pro). The misacylated Cys-tRNA(Pro) is not edited by ProRS. The sequence is that of Proline--tRNA ligase from Chlamydia muridarum (strain MoPn / Nigg).